Consider the following 387-residue polypeptide: MEQVVIVDAIRTPMGRSKGGAFRHVRAEDLSAHLMRSLLSRNPSLEASAIDDIYWGCVQQTLEQGFNIARNAALLAEIPHSVPANTVNRLCGSSMQALHDAARMIMTGDAGVCLIGGVEHMGHVPMSHGVDFHPGLSRNVAKAAGMMGLTAEMLARLHGISREMQDQFAARSHARAWAATQSGAFKAEIIPTGGHDADGVLKSFNYDEVIRPETTVETLSTLKPAFDPVTGTVTAGTSSALSDGAAAMLLMSESRARELGLKPRARVRSMAVVGCDPSIMGYGPVPASKLALKKAGLSTSDIDVFEMNEAFAAQILPCIKDLGLMEQIDEKINLNGGAIALGHPLGCSGARISTTLINQMERKDAQFGLATMCIGLGQGIATVFERV.

The active-site Acyl-thioester intermediate is C91. Residues H343 and C373 each act as proton acceptor in the active site.

It belongs to the thiolase-like superfamily. Thiolase family. As to quaternary structure, heterotetramer of two alpha chains (FadB) and two beta chains (FadA).

The protein localises to the cytoplasm. The catalysed reaction is an acyl-CoA + acetyl-CoA = a 3-oxoacyl-CoA + CoA. The protein operates within lipid metabolism; fatty acid beta-oxidation. In terms of biological role, catalyzes the final step of fatty acid oxidation in which acetyl-CoA is released and the CoA ester of a fatty acid two carbons shorter is formed. The sequence is that of 3-ketoacyl-CoA thiolase from Klebsiella pneumoniae subsp. pneumoniae (strain ATCC 700721 / MGH 78578).